The following is a 487-amino-acid chain: GTPase Der (487 aa).

EngA-type G domains are found at residues 5–169 and 178–351; these read PKLA…SREI and IKVA…ANSQ. Residues 11–18, 58–62, 121–124, 184–191, 231–235, and 296–299 contribute to the GTP site; these read GRPNVGKS, DTGGI, NKID, GRANVGKS, DTAGI, and NKWD. The 88-residue stretch at 352–439 folds into the KH-like domain; that stretch reads KRITTHQLNK…IHLKGKTKKD (88 aa). Residues 441–466 are disordered; the sequence is PVSSLSLTRKQTKSTDQENNEYDELY.

Belongs to the TRAFAC class TrmE-Era-EngA-EngB-Septin-like GTPase superfamily. EngA (Der) GTPase family. As to quaternary structure, associates with the 50S ribosomal subunit.

GTPase that plays an essential role in the late steps of ribosome biogenesis. The polypeptide is GTPase Der (Protochlamydia amoebophila (strain UWE25)).